Here is a 156-residue protein sequence, read N- to C-terminus: Small ribosomal subunit protein uS7 (156 aa).

The protein belongs to the universal ribosomal protein uS7 family. In terms of assembly, part of the 30S ribosomal subunit. Contacts proteins S9 and S11.

Its function is as follows. One of the primary rRNA binding proteins, it binds directly to 16S rRNA where it nucleates assembly of the head domain of the 30S subunit. Is located at the subunit interface close to the decoding center, probably blocks exit of the E-site tRNA. The polypeptide is Small ribosomal subunit protein uS7 (Bordetella bronchiseptica (strain ATCC BAA-588 / NCTC 13252 / RB50) (Alcaligenes bronchisepticus)).